Reading from the N-terminus, the 141-residue chain is Hemoglobin subunit alpha-D (141 aa).

Residues 1 to 141 enclose the Globin domain; the sequence is MLTADDKKLI…VAAVLAEKYR (141 aa). Residues H58 and H87 each coordinate heme b.

Belongs to the globin family. As to quaternary structure, heterotetramer of two alpha-D chains and two beta chains. As to expression, red blood cells.

Its function is as follows. Involved in oxygen transport from the lung to the various peripheral tissues. The polypeptide is Hemoglobin subunit alpha-D (HBAD) (Struthio camelus (Common ostrich)).